Here is a 195-residue protein sequence, read N- to C-terminus: Molybdenum cofactor guanylyltransferase (195 aa).

Residues 10 to 12, Lys23, Asn51, Asp69, and Asp99 each bind GTP; that span reads LAG. Asp99 is a Mg(2+) binding site.

This sequence belongs to the MobA family. Monomer. Mg(2+) is required as a cofactor.

It localises to the cytoplasm. The catalysed reaction is Mo-molybdopterin + GTP + H(+) = Mo-molybdopterin guanine dinucleotide + diphosphate. Its function is as follows. Transfers a GMP moiety from GTP to Mo-molybdopterin (Mo-MPT) cofactor (Moco or molybdenum cofactor) to form Mo-molybdopterin guanine dinucleotide (Mo-MGD) cofactor. The sequence is that of Molybdenum cofactor guanylyltransferase from Histophilus somni (strain 129Pt) (Haemophilus somnus).